Reading from the N-terminus, the 86-residue chain is Insulin (86 aa).

3 disulfide bridges follow: Cys7-Cys72, Cys19-Cys85, and Cys71-Cys76. The propeptide at 33–63 (ELEDPQVGQADPGVVPEAGRLQPLALEMTLQ) is c peptide.

The protein belongs to the insulin family. Heterodimer of a B chain and an A chain linked by two disulfide bonds.

The protein localises to the secreted. Insulin decreases blood glucose concentration. It increases cell permeability to monosaccharides, amino acids and fatty acids. It accelerates glycolysis, the pentose phosphate cycle, and glycogen synthesis in liver. The sequence is that of Insulin (INS) from Chinchilla chinchilla (Short-tailed chinchilla).